A 797-amino-acid polypeptide reads, in one-letter code: Protocadherin beta-11 (797 aa).

The N-terminal stretch at 1 to 26 (MENQGTRTQQIRQVLLLFVLLGMSQA) is a signal peptide. Topologically, residues 27-690 (GSETWSFSVA…AQADSLTVYL (664 aa)) are extracellular. Cadherin domains are found at residues 35-133 (VAEE…SPIF), 138-242 (MLLE…SPEF), 247-347 (YEVK…APEI), 352-451 (ITSP…APTF), and 456-561 (YTLF…SPFV). N-linked (GlcNAc...) asparagine glycosylation is found at asparagine 418, asparagine 436, asparagine 487, and asparagine 567. Positions 568–671 (GSAPCTELVP…LVDGFSQPYL (104 aa)) constitute a Cadherin 6 domain. Residues 691–711 (VVALASVSSLFLFSVLLFVAV) traverse the membrane as a helical segment. Residues 712-797 (RLCRRSRAAS…TFRNSFGFNF (86 aa)) lie on the Cytoplasmic side of the membrane.

It localises to the cell membrane. Potential calcium-dependent cell-adhesion protein. May be involved in the establishment and maintenance of specific neuronal connections in the brain. In Homo sapiens (Human), this protein is Protocadherin beta-11 (PCDHB11).